The primary structure comprises 292 residues: Elongation factor Ts (292 aa).

The segment at 79-82 is involved in Mg(2+) ion dislocation from EF-Tu; the sequence is TDFV.

The protein belongs to the EF-Ts family.

It is found in the cytoplasm. Functionally, associates with the EF-Tu.GDP complex and induces the exchange of GDP to GTP. It remains bound to the aminoacyl-tRNA.EF-Tu.GTP complex up to the GTP hydrolysis stage on the ribosome. The chain is Elongation factor Ts from Malacoplasma penetrans (strain HF-2) (Mycoplasma penetrans).